The chain runs to 580 residues: CRISPR-associated exonuclease Cas4/endonuclease Cas1 fusion (580 aa).

A CRISPR-associated exonuclease Cas4 region spans residues 1 to 223; sequence MAPSDTPPSA…RCSLLPICLP (223 aa). Cys-44 contacts [4Fe-4S] cluster. The Mn(2+) site is built by Asp-112 and Glu-125. The [4Fe-4S] cluster site is built by Cys-212, Cys-215, and Cys-221. The interval 248–580 is CRISPR-associated endonuclease Cas1; it reads LYGQTPGARI…IPRYPHYCPR (333 aa). Mn(2+)-binding residues include Glu-401, His-472, and Glu-487.

This sequence in the N-terminal section; belongs to the CRISPR-associated exonuclease Cas4 family. In the C-terminal section; belongs to the CRISPR-associated endonuclease Cas1 family. In terms of assembly, homodimer, forms a heterotetramer with a Cas2 homodimer. Requires [4Fe-4S] cluster as cofactor. The cofactor is Mg(2+). It depends on Mn(2+) as a cofactor.

It carries out the reaction exonucleolytic cleavage in the 5'- to 3'-direction to yield nucleoside 3'-phosphates.. Its function is as follows. CRISPR (clustered regularly interspaced short palindromic repeat), is an adaptive immune system that provides protection against mobile genetic elements (viruses, transposable elements and conjugative plasmids). CRISPR clusters contain spacers, sequences complementary to antecedent mobile elements, and target invading nucleic acids. CRISPR clusters are transcribed and processed into CRISPR RNA (crRNA). The Cas4 region acts as a ssDNA exonuclease, while the Cas1 region acts as a dsDNA endonuclease. Involved in the integration of spacer DNA into the CRISPR cassette. In Rhodospirillum rubrum (strain ATCC 11170 / ATH 1.1.1 / DSM 467 / LMG 4362 / NCIMB 8255 / S1), this protein is CRISPR-associated exonuclease Cas4/endonuclease Cas1 fusion (cas4-cas1).